The following is a 428-amino-acid chain: MSAIVDIFAREILDSRGNPTVECDVLLESGVMGRAAVPSGASTGQKEALELRDGDKSRYSGKGVLKAVEHVNNQIAQALIGIDANEQSYIDQIMIELDGTENKGNLGANATLAVSMAVARAAAEDSGLPLYRYLGGAGPMSLPVPMMNVINGGEHANNSLNIQEFMIMPVGAKSFREALRCGAEIFHALKKLCDSKGFPTTVGDEGGFAPNLNSHKEALQLMVEATEAAGYKAGEDVLFALDCASSEFYKDGKYHLEAEGRSYTNAEFAEYLEGLVNEFPIISIEDGMDENDWEGWKLLTEKLGGKVQLVGDDLFVTNPKILAEGIEKGVANALLVKVNQIGTLSETLKAVDLAKRNRYASVMSHRSGETEDSTIADLAVATNCMQIKTGSLSRSDRMAKYNQLLRIEEELAEAADYPSKAAFYQLGK.

Glutamine 163 contributes to the (2R)-2-phosphoglycerate binding site. Glutamate 205 serves as the catalytic Proton donor. Residues aspartate 242, glutamate 285, and aspartate 312 each coordinate Mg(2+). Residues lysine 337, arginine 366, serine 367, and lysine 388 each coordinate (2R)-2-phosphoglycerate. Catalysis depends on lysine 337, which acts as the Proton acceptor.

This sequence belongs to the enolase family. The cofactor is Mg(2+).

It localises to the cytoplasm. It is found in the secreted. Its subcellular location is the cell surface. The enzyme catalyses (2R)-2-phosphoglycerate = phosphoenolpyruvate + H2O. It participates in carbohydrate degradation; glycolysis; pyruvate from D-glyceraldehyde 3-phosphate: step 4/5. In terms of biological role, catalyzes the reversible conversion of 2-phosphoglycerate (2-PG) into phosphoenolpyruvate (PEP). It is essential for the degradation of carbohydrates via glycolysis. In Neisseria meningitidis serogroup A / serotype 4A (strain DSM 15465 / Z2491), this protein is Enolase.